Reading from the N-terminus, the 326-residue chain is UDP-N-acetylglucosamine transporter (326 aa).

The next 8 helical transmembrane spans lie at 8–24, 42–58, 138–154, 174–190, 210–226, 247–263, 269–285, and 296–312; these read LSLGILVFQTTSLVLTM, AVVVAELLKIMACILLV, VYQWLSLVILMTGVAFV, FVGLMAVLTACFSSGFA, IQLGFFGSIFGLMGVYI, IVVILQALGGLVIAAVI, ILKGFATSLSIILSTLI, and TSVFFLGAILVITATFL.

Belongs to the nucleotide-sugar transporter family. SLC35A subfamily. In terms of assembly, interacts with SLC35A2; the interaction is reduced in the presence of SLC35A4. Found in a complex with SLC35A2 and SLC35A4.

It localises to the golgi apparatus membrane. In terms of biological role, uridine diphosphate-N-acetylglucosamine (UDP-GlcNAc) transporter in the Golgi apparatus. May supply UDP-GlcNAc as substrate for Golgi-resident glycosyltransferases that generate branching of diantennary oligosaccharides. This chain is UDP-N-acetylglucosamine transporter (SLC35A3), found in Canis lupus familiaris (Dog).